The chain runs to 160 residues: Transcription elongation factor GreB (160 aa).

The protein belongs to the GreA/GreB family. GreB subfamily.

Functionally, necessary for efficient RNA polymerase transcription elongation past template-encoded arresting sites. The arresting sites in DNA have the property of trapping a certain fraction of elongating RNA polymerases that pass through, resulting in locked ternary complexes. Cleavage of the nascent transcript by cleavage factors such as GreA or GreB allows the resumption of elongation from the new 3'terminus. GreB releases sequences of up to 9 nucleotides in length. This chain is Transcription elongation factor GreB, found in Vibrio vulnificus (strain YJ016).